The sequence spans 366 residues: GTPase Obg (366 aa).

The region spanning 1-161 is the Obg domain; it reads MRFVDEARIQ…FNLRLELKIL (161 aa). Positions 121 to 148 are disordered; it reads SGGRGGKGNEHFKSSTMRAPRFSQPGEP. In terms of domain architecture, OBG-type G spans 162–334; sequence ADAGLIGLPN…LVQELWQVCE (173 aa). GTP contacts are provided by residues 168–175, 193–197, 217–220, 287–290, and 315–317; these read GLPNAGKS, FTTLT, DIPG, NKID, and SAR. Residues serine 175 and threonine 195 each contribute to the Mg(2+) site.

The protein belongs to the TRAFAC class OBG-HflX-like GTPase superfamily. OBG GTPase family. Monomer. The cofactor is Mg(2+).

The protein resides in the cytoplasm. An essential GTPase which binds GTP, GDP and possibly (p)ppGpp with moderate affinity, with high nucleotide exchange rates and a fairly low GTP hydrolysis rate. Plays a role in control of the cell cycle, stress response, ribosome biogenesis and in those bacteria that undergo differentiation, in morphogenesis control. The polypeptide is GTPase Obg (Desulfovibrio desulfuricans (strain ATCC 27774 / DSM 6949 / MB)).